Here is a 186-residue protein sequence, read N- to C-terminus: Nucleoside diphosphate kinase, mitochondrial (186 aa).

Residues 1–32 constitute a mitochondrion transit peptide; it reads MGSLFGRVAALRALLCGPRFQCLLVRPSSGGP. Positions 44, 92, 120, 126, 137, and 147 each coordinate ATP. H150 acts as the Pros-phosphohistidine intermediate in catalysis.

The protein belongs to the NDK family. As to quaternary structure, homohexamer. Interacts with OPA1. Interacts with CAPN8. Mg(2+) is required as a cofactor. As to expression, expressed in the base region of the oxyntic and pyloric mucosae.

The protein localises to the mitochondrion intermembrane space. It is found in the mitochondrion matrix. The catalysed reaction is a 2'-deoxyribonucleoside 5'-diphosphate + ATP = a 2'-deoxyribonucleoside 5'-triphosphate + ADP. The enzyme catalyses a ribonucleoside 5'-diphosphate + ATP = a ribonucleoside 5'-triphosphate + ADP. In terms of biological role, major role in the synthesis of nucleoside triphosphates other than ATP. The ATP gamma phosphate is transferred to the NDP beta phosphate via a ping-pong mechanism, using a phosphorylated active-site intermediate. Through the catalyzed exchange of gamma-phosphate between di- and triphosphonucleosides participates in regulation of intracellular nucleotide homeostasis. Binds to anionic phospholipids, predominantly to cardiolipin; the binding inhibits its phosphotransfer activity. Acts as a mitochondria-specific NDK; its association with cardiolipin-containing mitochondrial inner membrane is coupled to respiration suggesting that ADP locally regenerated in the mitochondrion innermembrane space by its activity is directly taken up via ANT ADP/ATP translocase into the matrix space to stimulate respiratory ATP regeneration. Proposed to increase GTP-loading on dynamin-related GTPase OPA1 in mitochondria. In vitro can induce liposome cross-linking suggesting that it can cross-link inner and outer membranes to form contact sites, and promotes intermembrane migration of anionic phosphoplipids. Promotes the redistribution of cardiolipin between the mitochondrial inner membrane and outer membrane which is implicated in pro-apoptotic signaling. This Mus musculus (Mouse) protein is Nucleoside diphosphate kinase, mitochondrial (Nme4).